Consider the following 81-residue polypeptide: Defensin-like protein 43 (81 aa).

A signal peptide spans 1 to 27; sequence MGITKTSVTFLFLLILAAFVSNYNVLA. 4 disulfides stabilise this stretch: cysteine 40–cysteine 79, cysteine 44–cysteine 67, cysteine 53–cysteine 77, and cysteine 57–cysteine 78.

Belongs to the DEFL family.

It localises to the secreted. The sequence is that of Defensin-like protein 43 from Arabidopsis thaliana (Mouse-ear cress).